Here is a 327-residue protein sequence, read N- to C-terminus: Malate dehydrogenase (327 aa).

11–17 lines the NAD(+) pocket; it reads GAAGQIG. Positions 92 and 98 each coordinate substrate. NAD(+) contacts are provided by residues Asn105, Gln112, and 129-131; that span reads VGN. Substrate contacts are provided by Asn131 and Arg162. His187 functions as the Proton acceptor in the catalytic mechanism.

Belongs to the LDH/MDH superfamily. MDH type 2 family.

It carries out the reaction (S)-malate + NAD(+) = oxaloacetate + NADH + H(+). Its function is as follows. Catalyzes the reversible oxidation of malate to oxaloacetate. In Leptospira biflexa serovar Patoc (strain Patoc 1 / Ames), this protein is Malate dehydrogenase.